Consider the following 600-residue polypeptide: FERM domain-containing protein 3 (600 aa).

Positions 31 to 311 (MRCTIRLLDD…ENQAFYKYAK (281 aa)) constitute an FERM domain. Residues 413–440 (SAPVLGNSPARGLETTADVTHDEEESIR) form a disordered region. A helical transmembrane segment spans residues 534–554 (LLLAAIGLLMVVLPLLLILLE).

The protein localises to the membrane. This is FERM domain-containing protein 3 (frmd3) from Xenopus tropicalis (Western clawed frog).